Reading from the N-terminus, the 425-residue chain is MADKEAAFDDAVEERVINEEYKIWKKNTPFLYDLVMTHALEWPSLTAQWLSDVTRPDGKDFSIHRLVLGTHTSDEQNHLVIASVQLPNDDAQFDASHYDSEKGEFGGFGSVSGKIEIEIKITHDGEVNRARYMPQNPCIIATKTPTSDVLVFDYTKHPSKPDPSGECNPNLRLRGHQKEGYGLSWNPNLSGNLLSASDDHTICLWDISAVPKEGKVVDAKTIFTGHTAVVEDVSWHLLHESLFGSVADDQKLMIWDTRSNNTSKPSHSVDAHTAEVNCLSFNPYSEFILATGSADKTVALWDLRNLKLKLHSFESHKDEIFQVQWSPHNETILASSGTDRRLNVWDLSKIGEEQSPEDAEDGPPELLFIHGGHTAKISDFSWNPNEPWVICSVSEDNIMQVWQMAENIYNDEDTEGGVDPEGQGS.

A2 is modified (N-acetylalanine). WD repeat units lie at residues 32-125, 126-175, 176-223, 225-270, 271-314, 315-371, and 372-404; these read YDLV…THDG, EVNR…RLRG, HQKE…KTIF, GHTA…HSVD, AHTA…HSFE, SHKD…FIHG, and GHTA…VWQM.

Belongs to the WD repeat RBAP46/RBAP48/MSI1 family. As to quaternary structure, binds directly to histone H4, probably via helix 1 of the histone fold, a region that is not accessible when histone H4 is in chromatin. Probably forms a large corepressor complex that contains ncor1, sin3a, hdac1-A and/or hdac1-B, hdac2, rbbp4-A and/or rbbp4-B and possibly rbbp7.

The protein resides in the nucleus. The protein localises to the chromosome. It is found in the telomere. Functionally, core histone-binding subunit that may target chromatin assembly factors, chromatin remodeling factors and histone deacetylases to their histone substrates in a manner that is regulated by nucleosomal DNA. Component of several complexes which regulate chromatin metabolism. This chain is Histone-binding protein RBBP4-A (rbbp4-a), found in Xenopus laevis (African clawed frog).